The sequence spans 156 residues: E3 ubiquitin-protein ligase RNF181 (156 aa).

The RING-type; atypical zinc finger occupies 79 to 120 (CPVCLLEFEEGETVRQLPCEHLFHSSCILPWLGKTNSCPLCR).

Belongs to the RNF181 family.

The catalysed reaction is S-ubiquitinyl-[E2 ubiquitin-conjugating enzyme]-L-cysteine + [acceptor protein]-L-lysine = [E2 ubiquitin-conjugating enzyme]-L-cysteine + N(6)-ubiquitinyl-[acceptor protein]-L-lysine.. It participates in protein modification; protein ubiquitination. Its function is as follows. E3 ubiquitin-protein ligase which accepts ubiquitin from an E2 ubiquitin-conjugating enzyme in the form of a thioester and then directly transfers the ubiquitin to targeted substrates. Catalyzes monoubiquitination of 26S proteasome subunit PSMC2/RPT1. The protein is E3 ubiquitin-protein ligase RNF181 (rnf181) of Xenopus tropicalis (Western clawed frog).